The chain runs to 447 residues: MTIYHFVGIKGSGMSALAQILHDKGFQVQGSDVDKYFFTQKALEEKQIPIMTFSADNIQEGLTIIAGNAFPDTHEEIERALELGLPVIRYHKFLGQLIDGYTSIAITGSHGKTSTTGLLSHVVGAIRPTSYLIGDGTGSGTKGAEYFALEACEYQRHFLAYKPTYAIMTNIDWDHPDYFKSVDDVFNAFETLGKQVKKAVFALGDDAELRKLTLDIPIIYFGFGEENEFQAKNVIKETTGTKFDVYHRGEFLGSFEIPAYGDHNVLNALSVIALCDYEGLPVEDVKKELKTFEGVKRRFSITEKANQVLVDDYAHHPSEIRATVNAARQKYPDKKVVAVFQPHTFTRTRTFLQGFADSLNLADEVYLCDIFGSAREKTGNLTIADLAHKTKGNHIIKEEHTEELLKYPEAVILFMGAGDVQKFQAAYEKVLDHEVLTEADLKKSAIN.

108 to 114 (GSHGKTS) serves as a coordination point for ATP.

Belongs to the MurCDEF family.

It is found in the cytoplasm. The enzyme catalyses UDP-N-acetyl-alpha-D-muramate + L-alanine + ATP = UDP-N-acetyl-alpha-D-muramoyl-L-alanine + ADP + phosphate + H(+). Its pathway is cell wall biogenesis; peptidoglycan biosynthesis. Functionally, cell wall formation. The polypeptide is UDP-N-acetylmuramate--L-alanine ligase (Listeria monocytogenes serotype 4b (strain F2365)).